The chain runs to 1413 residues: Leucine-rich repeat receptor protein kinase MSL1 (1413 aa).

The signal sequence occupies residues M1–A23. N-linked (GlcNAc...) asparagine glycosylation is found at N153 and N192. 29 LRR repeats span residues F185–L209, Q210–L233, M235–L257, Q258–L281, K282–N304, S306–L329, V330–L353, K354–L377, Q379–L401, E402–L425, N427–C449, K450–L473, A475–W497, S498–P518, L519–G542, T543–G565, K567–L589, L590–S613, T615–K636, L637–L661, R662–C685, N687–L709, T710–A733, V745–C769, I771–L793, R794–L817, A818–I841, P843–K866, and S868–D890. N304 and N317 each carry an N-linked (GlcNAc...) asparagine glycan. Residues N461, N496, and N499 are each glycosylated (N-linked (GlcNAc...) asparagine). N-linked (GlcNAc...) asparagine glycans are attached at residues N554, N568, and N601. N-linked (GlcNAc...) asparagine glycosylation is found at N663 and N697. The N-linked (GlcNAc...) asparagine glycan is linked to N768. An N-linked (GlcNAc...) asparagine glycan is attached at N795. N-linked (GlcNAc...) asparagine glycosylation is found at N878, N901, N917, and N928. LRR repeat units follow at residues F918 to V942 and S944 to M966. The N-linked (GlcNAc...) asparagine glycan is linked to N973. A helical transmembrane segment spans residues T1016–L1036. The Protein kinase domain occupies F1107–V1401. ATP-binding positions include V1113 to V1121 and K1135. D1234 serves as the catalytic Proton acceptor.

The protein belongs to the protein kinase superfamily. Ser/Thr protein kinase family. In terms of tissue distribution, expressed in roots, leaves, shoots and spikelets.

The protein resides in the cell membrane. The catalysed reaction is L-seryl-[protein] + ATP = O-phospho-L-seryl-[protein] + ADP + H(+). It carries out the reaction L-threonyl-[protein] + ATP = O-phospho-L-threonyl-[protein] + ADP + H(+). Receptor-like kinase that may play a role male and female sporogenesis. The polypeptide is Leucine-rich repeat receptor protein kinase MSL1 (Oryza sativa subsp. japonica (Rice)).